The following is a 336-amino-acid chain: G patch domain and ankyrin repeat-containing protein 1 homolog (336 aa).

2 ANK repeats span residues 123–152 and 156–185; these read FGWT…QVET and SGNT…LEET. The 47-residue stretch at 240 to 286 folds into the G-patch domain; sequence AKNRGLQLMVKQGWDQEHGLGPSQSGRLYPVKTVLRKQRTGLGIEQQ.

The chain is G patch domain and ankyrin repeat-containing protein 1 homolog from Drosophila melanogaster (Fruit fly).